Reading from the N-terminus, the 146-residue chain is Probable glycine cleavage system H protein 1, mitochondrial (146 aa).

A mitochondrion-targeting transit peptide spans 1-30 (MLKTLRFGTRAFGQNLNIAKRNFCTRYTND). Positions 41–123 (NYRLGITDFA…MGDGWIVEYK (83 aa)) constitute a Lipoyl-binding domain. Lys-82 is subject to N6-lipoyllysine.

The protein belongs to the GcvH family. In terms of assembly, the glycine cleavage system is composed of four proteins: P, T, L and H. It depends on (R)-lipoate as a cofactor.

The protein localises to the mitochondrion. Functionally, the glycine cleavage system catalyzes the degradation of glycine. The H protein shuttles the methylamine group of glycine from the P protein to the T protein. In Dictyostelium discoideum (Social amoeba), this protein is Probable glycine cleavage system H protein 1, mitochondrial (gcvH1).